Consider the following 554-residue polypeptide: Formate--tetrahydrofolate ligase (554 aa).

Residue 65-72 (TPAGEGKT) participates in ATP binding.

This sequence belongs to the formate--tetrahydrofolate ligase family.

It carries out the reaction (6S)-5,6,7,8-tetrahydrofolate + formate + ATP = (6R)-10-formyltetrahydrofolate + ADP + phosphate. It participates in one-carbon metabolism; tetrahydrofolate interconversion. This Petrotoga mobilis (strain DSM 10674 / SJ95) protein is Formate--tetrahydrofolate ligase.